A 483-amino-acid polypeptide reads, in one-letter code: Isocitrate dehydrogenase [NADP] (483 aa).

Threonine 74 is a binding site for NADP(+). Serine 83, asparagine 85, arginine 89, arginine 99, and arginine 121 together coordinate D-threo-isocitrate. Aspartate 232 serves as a coordination point for Mg(2+). NADP(+)-binding positions include 264 to 270 and asparagine 277; that span reads HGSAPDI.

It belongs to the isocitrate and isopropylmalate dehydrogenases family. In terms of assembly, homodimer. The cofactor is Mg(2+). It depends on Mn(2+) as a cofactor.

It catalyses the reaction D-threo-isocitrate + NADP(+) = 2-oxoglutarate + CO2 + NADPH. Functionally, catalyzes the oxidative decarboxylation of isocitrate to 2-oxoglutarate and carbon dioxide with the concomitant reduction of NADP(+). This is Isocitrate dehydrogenase [NADP] (icd) from Rickettsia conorii (strain ATCC VR-613 / Malish 7).